The sequence spans 177 residues: Protein ParB (177 aa).

The N-terminal stretch at 1–26 (MKRRSYAMLRAAAALAVLVVASPAWA) is a signal peptide. Residues 27–157 (ELRGEVVRII…RGKRVGLWSD (131 aa)) enclose the TNase-like domain. Active-site residues include Arg-53, Glu-61, and Arg-95.

In terms of assembly, monomer. Ca(2+) serves as cofactor. In terms of processing, the N-terminus is blocked.

It is found in the secreted. Its activity is regulated as follows. Endonuclease activity is inhibited by EDTA. In terms of biological role, involved in plasmid partition. An endonuclease that acts on supercoiled dsDNA, converting it first to open circular DNA and then linearizing it. Preferentially cleaves regions in dsDNA that are capable of forming ssDNA, such as AT-rich regions and sequences that can form cruciforms. Has poor endonucleolytic activity on linear DNA, has 5'-3' exonuclease activity on dsDNA cleaving generating 3'-phosphonucleotides. The sequence is that of Protein ParB from Escherichia coli.